Here is a 266-residue protein sequence, read N- to C-terminus: MLTKRIIPCLDVDNGRVVKGLNFESIKDAGDPVELAAKYSKDGADELVFLDITASQEKRKTIKELVSNVAKVIDIPFTVGGGVNSMDDARNILLSGADKVGVNTGAVKNPELLTELMTIFGKQCVVVAIDAKRNYSEDSTKTMFEENGKKFWFEVFIYGGKQETGLDAIQWAKKATELGAGEVLLTSIDKDGTKDGYDILLTKKIVDTVSVPVIASGGCGKPEDMSEIFVKSDVDAALAASIFHYENQSVNQVKKILRDKNISVRL.

Catalysis depends on residues aspartate 11 and aspartate 130.

This sequence belongs to the HisA/HisF family. As to quaternary structure, heterodimer of HisH and HisF.

It is found in the cytoplasm. The catalysed reaction is 5-[(5-phospho-1-deoxy-D-ribulos-1-ylimino)methylamino]-1-(5-phospho-beta-D-ribosyl)imidazole-4-carboxamide + L-glutamine = D-erythro-1-(imidazol-4-yl)glycerol 3-phosphate + 5-amino-1-(5-phospho-beta-D-ribosyl)imidazole-4-carboxamide + L-glutamate + H(+). The protein operates within amino-acid biosynthesis; L-histidine biosynthesis; L-histidine from 5-phospho-alpha-D-ribose 1-diphosphate: step 5/9. Its function is as follows. IGPS catalyzes the conversion of PRFAR and glutamine to IGP, AICAR and glutamate. The HisF subunit catalyzes the cyclization activity that produces IGP and AICAR from PRFAR using the ammonia provided by the HisH subunit. The polypeptide is Imidazole glycerol phosphate synthase subunit HisF (Nitrosopumilus maritimus (strain SCM1)).